The chain runs to 486 residues: Palmitoyltransferase pfa4 (486 aa).

Residues 1-15 (MTNLQTGPTTRGLQR) are Cytoplasmic-facing. A helical transmembrane segment spans residues 16 to 36 (FAIPAVCGLIIFLGYYSQYLF). Residues 37-51 (NTSADLAPGPLTCRE) lie on the Lumenal side of the membrane. Residues 52-72 (SLIFNILLVCLWLTYYQACTV) form a helical membrane-spanning segment. At 73 to 146 (DPGQYKFPPK…NCVSLQTFPH (74 aa)) the chain is on the cytoplasmic side. A compositionally biased stretch (basic and acidic residues) spans 81–91 (PKEKEDGDNNN). The interval 81-101 (PKEKEDGDNNNKRGGRGPQKA) is disordered. Residues 102 to 152 (KWCKKCDAPKPPRAHHCRHCARCIPRMDHHCPWTGNCVSLQTFPHFLRFLV) form the DHHC domain. Cys-132 serves as the catalytic S-palmitoyl cysteine intermediate. Residues 147–166 (FLRFLVYTNAALVYFARLLW) form a helical membrane-spanning segment. At 167–178 (TRLYYGLWDQRH) the chain is on the lumenal side. A helical membrane pass occupies residues 179-201 (VPAYLGPSVGALLGCTMLSIAWF). At 202-486 (ATQFALMVLL…RKVKSNGVHE (285 aa)) the chain is on the cytoplasmic side. The interval 314 to 420 (NDRVGMWPPP…QDGRAWMNSE (107 aa)) is disordered. Composition is skewed to basic and acidic residues over residues 324–333 (DPEKLRRERA) and 346–376 (LNTE…DLRR). Positions 386 to 399 (EEDEIMAELEEDEG) are enriched in acidic residues.

It belongs to the DHHC palmitoyltransferase family. PFA4 subfamily.

The protein localises to the endoplasmic reticulum membrane. The catalysed reaction is L-cysteinyl-[protein] + hexadecanoyl-CoA = S-hexadecanoyl-L-cysteinyl-[protein] + CoA. Its function is as follows. Mediates the reversible addition of palmitate to target proteins, thereby regulating their membrane association and biological function. This is Palmitoyltransferase pfa4 from Neurospora crassa (strain ATCC 24698 / 74-OR23-1A / CBS 708.71 / DSM 1257 / FGSC 987).